We begin with the raw amino-acid sequence, 318 residues long: MQVTFLGTSSGVPTRARNVSAVALRLPQRAELWLFDCGEGTQHQFLRSDLRLSQLRRVFVSHMHGDHVFGLPGLLASLGLSGNSNGVDLYGPDPLESYLQGVLRNSSTRIGYPLKVHRVRDAAEQNLIVFEDKDILVRCTPLTHRVPAYAYRVEQKPKPGHFNLERAQSLGIPPGPVYAALKRGEQVSLDDGRVVDGRDFCGPDRPGASIVFCTDTVFSEAAVSLAAGADLLIHEATFAHSEAEMAYQKQHSTSTMAAQTAAEAGVGKLVLTHLSPRYAPGNPVTPNDLLREAQAIFSNTILAKDFLSFEVAPRCNSS.

Residues histidine 62, histidine 64, aspartate 66, histidine 67, histidine 144, aspartate 215, and histidine 273 each contribute to the Zn(2+) site. Aspartate 66 (proton acceptor) is an active-site residue.

The protein belongs to the RNase Z family. In terms of assembly, homodimer. The cofactor is Zn(2+).

The enzyme catalyses Endonucleolytic cleavage of RNA, removing extra 3' nucleotides from tRNA precursor, generating 3' termini of tRNAs. A 3'-hydroxy group is left at the tRNA terminus and a 5'-phosphoryl group is left at the trailer molecule.. Its function is as follows. Zinc phosphodiesterase, which displays some tRNA 3'-processing endonuclease activity. Probably involved in tRNA maturation, by removing a 3'-trailer from precursor tRNA. This Prochlorococcus marinus (strain MIT 9313) protein is Ribonuclease Z.